Reading from the N-terminus, the 596-residue chain is MRQRTPFARPGLLASAALALVLGPLAASAQEQVAPPKDPAAALEDHKTRTDNRYEPSLDNLAQQDVAAPGAPEGVSALSDAQYNEANKIYFERCAGCHGVLRKGATGKALTPDLTRDLGFDYLQSFITYGSPAGMPNWGTSGELSAEQVDLMANYLLLDPAAPPEFGMKEMRESWKVHVAPEDRPTQQENDWDLENLFSVTLRDAGQIALIDGATYEIKSVLDTGYAVHISRLSASGRYLFVIGRDGKVNMIDLWMKEPTTVAEIKIGSEARSIETSKMEGWEDKYAIAGAYWPPQYVIMDGETLEPKKIQSTRGMTYDEQEYHPEPRVAAILASHYRPEFIVNVKETGKILLVDYTDLDNLKTTEISAERFLHDGGLDGSHRYFITAANARNKLVVIDTKEGKLVAIEDTGGQTPHPGRGANFVHPTFGPVWATSHMGDDSVALIGTDPEGHPDNAWKILDSFPALGGGSLFIKTHPNSQYLYVDATLNPEAEISGSVAVFDIKAMTGDGSDPEFKTLPIAEWAGITEGQPRVVQGEFNKDGTEVWFSVWNGKDQESALVVVDDKTLELKHVIKDERLVTPTGKFNVYNTMTDTY.

The first 29 residues, 1–29, serve as a signal peptide directing secretion; that stretch reads MRQRTPFARPGLLASAALALVLGPLAASA. The tract at residues 30–76 is N-terminal tail; it reads QEQVAPPKDPAAALEDHKTRTDNRYEPSLDNLAQQDVAAPGAPEGVS. Histidine 46 contributes to the heme c binding site. Heme d1 contacts are provided by tyrosine 54 and serine 57. The 86-residue stretch at 77–162 folds into the Cytochrome c domain; it reads ALSDAQYNEA…ANYLLLDPAA (86 aa). Cysteine 94, cysteine 97, histidine 98, lysine 108, and tyrosine 122 together coordinate heme c. Residues tryptophan 138, arginine 203, histidine 229, arginine 232, arginine 245, arginine 272, tyrosine 292, arginine 420, glutamine 536, and threonine 583 each contribute to the heme d1 site. A D1-heme domain region spans residues 163–596; it reads PPEFGMKEMR…NVYNTMTDTY (434 aa).

Homodimer. Requires heme c as cofactor. Heme serves as cofactor.

The protein resides in the periplasm. The catalysed reaction is nitric oxide + Fe(III)-[cytochrome c] + H2O = Fe(II)-[cytochrome c] + nitrite + 2 H(+). It catalyses the reaction A + NH4(+) + H2O = hydroxylamine + AH2 + H(+). This is Nitrite reductase (nirS) from Paracoccus pantotrophus (Thiosphaera pantotropha).